Here is a 199-residue protein sequence, read N- to C-terminus: Large ribosomal subunit protein bL25 (199 aa).

This sequence belongs to the bacterial ribosomal protein bL25 family. CTC subfamily. In terms of assembly, part of the 50S ribosomal subunit; part of the 5S rRNA/L5/L18/L25 subcomplex. Contacts the 5S rRNA. Binds to the 5S rRNA independently of L5 and L18.

Functionally, this is one of the proteins that binds to the 5S RNA in the ribosome where it forms part of the central protuberance. The sequence is that of Large ribosomal subunit protein bL25 from Caulobacter sp. (strain K31).